The primary structure comprises 509 residues: ATP synthase subunit alpha, mitochondrial (509 aa).

171 to 178 (GDRQTGKT) is a binding site for ATP.

The protein belongs to the ATPase alpha/beta chains family. In terms of assembly, F-type ATPases have 2 components, CF(1) - the catalytic core - and CF(0) - the membrane proton channel. CF(1) has five subunits: alpha(3), beta(3), gamma(1), delta(1), epsilon(1). CF(0) has three main subunits: a, b and c.

The protein localises to the mitochondrion. Its subcellular location is the mitochondrion inner membrane. Its function is as follows. Mitochondrial membrane ATP synthase (F(1)F(0) ATP synthase or Complex V) produces ATP from ADP in the presence of a proton gradient across the membrane which is generated by electron transport complexes of the respiratory chain. F-type ATPases consist of two structural domains, F(1) - containing the extramembraneous catalytic core, and F(0) - containing the membrane proton channel, linked together by a central stalk and a peripheral stalk. During catalysis, ATP synthesis in the catalytic domain of F(1) is coupled via a rotary mechanism of the central stalk subunits to proton translocation. Subunits alpha and beta form the catalytic core in F(1). Rotation of the central stalk against the surrounding alpha(3)beta(3) subunits leads to hydrolysis of ATP in three separate catalytic sites on the beta subunits. Subunit alpha does not bear the catalytic high-affinity ATP-binding sites. In Nicotiana plumbaginifolia (Leadwort-leaved tobacco), this protein is ATP synthase subunit alpha, mitochondrial (ATPA).